The sequence spans 747 residues: Endoglucanase D (747 aa).

The signal sequence occupies residues 1 to 39 (MHSASRTRARTRVRTAVSGLLAATVLAAPLTLVAAPAQA). Glutamate 208 functions as the Proton donor in the catalytic mechanism. The active-site Nucleophile is the glutamate 349. The segment at 456-475 (APTGLRAGTPTASTVPLTWS) is disordered. 2 Fibronectin type-III domains span residues 456–543 (APTG…TAAG) and 552–639 (VPTG…TAPD). A compositionally biased stretch (polar residues) spans 465 to 475 (PTASTVPLTWS). Positions 638–747 (PDPTTGSCAV…TVGGATCTTR (110 aa)) constitute a CBM2 domain.

The protein belongs to the glycosyl hydrolase 5 (cellulase A) family.

The enzyme catalyses Endohydrolysis of (1-&gt;4)-beta-D-glucosidic linkages in cellulose, lichenin and cereal beta-D-glucans.. It participates in glycan metabolism; cellulose degradation. The protein is Endoglucanase D (cenD) of Cellulomonas fimi.